We begin with the raw amino-acid sequence, 142 residues long: HTH-type transcriptional regulator MntR (142 aa).

One can recognise an HTH dtxR-type domain in the interval 1 to 63; that stretch reads MPTPSMEDYI…YEKYRGLVLT (63 aa). 6 residues coordinate Mn(2+): D8, E11, H77, E99, E102, and H103.

This sequence belongs to the DtxR/MntR family. As to quaternary structure, homodimer.

The protein resides in the cytoplasm. With respect to regulation, DNA binding is strongly activated by Mn(2+). Central regulator of manganese homeostasis. This Bacillus cereus (strain ATCC 14579 / DSM 31 / CCUG 7414 / JCM 2152 / NBRC 15305 / NCIMB 9373 / NCTC 2599 / NRRL B-3711) protein is HTH-type transcriptional regulator MntR.